Reading from the N-terminus, the 587-residue chain is Protein NRT1/ PTR FAMILY 2.9 (587 aa).

12 helical membrane passes run 35 to 55 (FEKLGIVGSSSNLVIYLTTVF), 65 to 85 (VVNIYGGTSNFGTIVAAFLCD), 94 to 114 (LSFAMIACFLGSVAMDLTAVI), 135 to 155 (IGQIMFLAGAMVLLVIGAGGI), 181 to 201 (FFNWYFFTFTFAQMVSLTLIV), 209 to 229 (WSIGLAIPAILMLLGCIIFFA), 325 to 345 (CVIRVLPVWLSAALFYLAYIQ), 368 to 388 (IPAGSYTVFLMLGMTIFIPIY), 412 to 432 (VGAGLFLCITSMMVSAIVEQY), 457 to 477 (GMWLIPQLVLMGIADALAGVG), 493 to 513 (FAGSLYYCGIGLASYLSTFLL), and 540 to 560 (YFYFLVAGMMTLNLAYFLLVS).

It belongs to the major facilitator superfamily. Proton-dependent oligopeptide transporter (POT/PTR) (TC 2.A.17) family. In terms of tissue distribution, expressed in roots, stems and major veins of the leaves. Detected in the companion cells of the root phloem.

The protein resides in the cell membrane. Functionally, low-affinity nitrate transporter facilitating nitrate loading into root phloem. Not involved in dipeptides transport, but has a weak glucosinolate transport activity. The protein is Protein NRT1/ PTR FAMILY 2.9 (NPF2.9) of Arabidopsis thaliana (Mouse-ear cress).